A 20-amino-acid chain; its full sequence is Truncated non-structural protein of 4.9 kDa (20 aa).

This sequence belongs to the coronaviruses ns4.9 protein family.

In Sus scrofa (Pig), this protein is Truncated non-structural protein of 4.9 kDa.